A 108-amino-acid polypeptide reads, in one-letter code: Tyrosine-protein phosphatase 5 (108 aa).

The Tyrosine-protein phosphatase domain occupies 1–108 (QESTVIVMLT…QGNNPSPIIV (108 aa)). Asp78 is a binding site for substrate.

This sequence belongs to the protein-tyrosine phosphatase family.

It catalyses the reaction O-phospho-L-tyrosyl-[protein] + H2O = L-tyrosyl-[protein] + phosphate. The protein is Tyrosine-protein phosphatase 5 (STY-5) of Styela plicata (Wrinkled sea squirt).